Consider the following 161-residue polypeptide: SsrA-binding protein (161 aa).

A disordered region spans residues Asp-138 to Arg-161. A compositionally biased stretch (basic and acidic residues) spans Lys-139–Arg-154.

It belongs to the SmpB family.

It localises to the cytoplasm. Functionally, required for rescue of stalled ribosomes mediated by trans-translation. Binds to transfer-messenger RNA (tmRNA), required for stable association of tmRNA with ribosomes. tmRNA and SmpB together mimic tRNA shape, replacing the anticodon stem-loop with SmpB. tmRNA is encoded by the ssrA gene; the 2 termini fold to resemble tRNA(Ala) and it encodes a 'tag peptide', a short internal open reading frame. During trans-translation Ala-aminoacylated tmRNA acts like a tRNA, entering the A-site of stalled ribosomes, displacing the stalled mRNA. The ribosome then switches to translate the ORF on the tmRNA; the nascent peptide is terminated with the 'tag peptide' encoded by the tmRNA and targeted for degradation. The ribosome is freed to recommence translation, which seems to be the essential function of trans-translation. The protein is SsrA-binding protein of Aliivibrio fischeri (strain ATCC 700601 / ES114) (Vibrio fischeri).